We begin with the raw amino-acid sequence, 231 residues long: Uracil-DNA glycosylase (231 aa).

Asp74 serves as the catalytic Proton acceptor.

It belongs to the uracil-DNA glycosylase (UDG) superfamily. UNG family.

It localises to the cytoplasm. It catalyses the reaction Hydrolyzes single-stranded DNA or mismatched double-stranded DNA and polynucleotides, releasing free uracil.. Excises uracil residues from the DNA which can arise as a result of misincorporation of dUMP residues by DNA polymerase or due to deamination of cytosine. This Campylobacter jejuni (strain RM1221) protein is Uracil-DNA glycosylase.